Here is an 86-residue protein sequence, read N- to C-terminus: UPF0297 protein SAHV_1604 (86 aa).

It belongs to the UPF0297 family.

The polypeptide is UPF0297 protein SAHV_1604 (Staphylococcus aureus (strain Mu3 / ATCC 700698)).